The sequence spans 588 residues: Adenine deaminase (588 aa).

This sequence belongs to the metallo-dependent hydrolases superfamily. Adenine deaminase family. In terms of assembly, homodimer. Mn(2+) is required as a cofactor.

It carries out the reaction adenine + H2O + H(+) = hypoxanthine + NH4(+). In Shigella flexneri serotype 5b (strain 8401), this protein is Adenine deaminase.